The primary structure comprises 101 residues: Ubiquitin-related modifier 1 (101 aa).

Residue glycine 101 is modified to 1-thioglycine. Residue glycine 101 forms a Glycyl lysine isopeptide (Gly-Lys) (interchain with K-? in acceptor proteins) linkage.

Belongs to the URM1 family. In terms of processing, C-terminal thiocarboxylation occurs in 2 steps, it is first acyl-adenylated (-COAMP) via the hesA/moeB/thiF part of UBA4, then thiocarboxylated (-COSH) via the rhodanese domain of UBA4.

The protein resides in the cytoplasm. Its pathway is tRNA modification; 5-methoxycarbonylmethyl-2-thiouridine-tRNA biosynthesis. Functionally, acts as a sulfur carrier required for 2-thiolation of mcm(5)S(2)U at tRNA wobble positions of cytosolic tRNA(Lys), tRNA(Glu) and tRNA(Gln). Serves as sulfur donor in tRNA 2-thiolation reaction by being thiocarboxylated (-COSH) at its C-terminus by the MOCS3 homolog UBA4. The sulfur is then transferred to tRNA to form 2-thiolation of mcm(5)S(2)U. Prior mcm(5) tRNA modification by the elongator complex is required for 2-thiolation. Also acts as a ubiquitin-like protein (UBL) that is covalently conjugated via an isopeptide bond to lysine residues of target proteins such as AHP1. The thiocarboxylated form serves as substrate for conjugation and oxidative stress specifically induces the formation of UBL-protein conjugates. The polypeptide is Ubiquitin-related modifier 1 (Scheffersomyces stipitis (strain ATCC 58785 / CBS 6054 / NBRC 10063 / NRRL Y-11545) (Yeast)).